Reading from the N-terminus, the 426-residue chain is Glucose-6-phosphate isomerase (426 aa).

The active-site Proton donor is the Glu-282. Residues His-303 and Lys-417 contribute to the active site.

The protein belongs to the GPI family.

Its subcellular location is the cytoplasm. It carries out the reaction alpha-D-glucose 6-phosphate = beta-D-fructose 6-phosphate. Its pathway is carbohydrate biosynthesis; gluconeogenesis. It functions in the pathway carbohydrate degradation; glycolysis; D-glyceraldehyde 3-phosphate and glycerone phosphate from D-glucose: step 2/4. Functionally, catalyzes the reversible isomerization of glucose-6-phosphate to fructose-6-phosphate. The protein is Glucose-6-phosphate isomerase of Aster yellows witches'-broom phytoplasma (strain AYWB).